The chain runs to 310 residues: Cytochrome f (310 aa).

Positions 1-27 are cleaved as a signal peptide; that stretch reads MRRHLSLFLGSLVIGLALLIAPAASWA. Positions 28, 48, 51, and 52 each coordinate heme. The helical transmembrane segment at 277-297 threads the bilayer; it reads IYGLLAFFAAVALAQIMLVLK.

This sequence belongs to the cytochrome f family. The 4 large subunits of the cytochrome b6-f complex are cytochrome b6, subunit IV (17 kDa polypeptide, PetD), cytochrome f and the Rieske protein, while the 4 small subunits are PetG, PetL, PetM and PetN. The complex functions as a dimer. Heme serves as cofactor.

It is found in the cellular thylakoid membrane. In terms of biological role, component of the cytochrome b6-f complex, which mediates electron transfer between photosystem II (PSII) and photosystem I (PSI), cyclic electron flow around PSI, and state transitions. This Synechococcus sp. (strain CC9605) protein is Cytochrome f.